The following is a 741-amino-acid chain: Moderate conductance mechanosensitive channel YbiO (741 aa).

Positions Met1 to Ala18 are cleaved as a signal peptide. A disordered region spans residues Pro22–Ile42. Residues Thr25–Thr34 show a composition bias toward low complexity. 11 helical membrane passes run Met143 to Tyr163, Ala185 to Gly205, Leu225 to Cys245, Leu268 to Asn288, Ile294 to Ile314, Phe343 to Leu363, Phe372 to Gly392, Ile432 to Trp452, Ile466 to Ser486, Leu509 to Val529, and Ile533 to Phe553.

Belongs to the MscS (TC 1.A.23) family. Homoheptamer.

It is found in the cell inner membrane. Functionally, mechanosensitive channel that protects cells against hypoosmotic stress when highly overexpressed. The polypeptide is Moderate conductance mechanosensitive channel YbiO (ybiO) (Escherichia coli (strain K12)).